The following is a 279-amino-acid chain: Bifunctional protein FolD (279 aa).

NADP(+) is bound by residues 164-166 (GRS), S189, and I230.

Belongs to the tetrahydrofolate dehydrogenase/cyclohydrolase family. In terms of assembly, homodimer.

It carries out the reaction (6R)-5,10-methylene-5,6,7,8-tetrahydrofolate + NADP(+) = (6R)-5,10-methenyltetrahydrofolate + NADPH. The catalysed reaction is (6R)-5,10-methenyltetrahydrofolate + H2O = (6R)-10-formyltetrahydrofolate + H(+). Its pathway is one-carbon metabolism; tetrahydrofolate interconversion. Functionally, catalyzes the oxidation of 5,10-methylenetetrahydrofolate to 5,10-methenyltetrahydrofolate and then the hydrolysis of 5,10-methenyltetrahydrofolate to 10-formyltetrahydrofolate. The polypeptide is Bifunctional protein FolD (Agathobacter rectalis (strain ATCC 33656 / DSM 3377 / JCM 17463 / KCTC 5835 / VPI 0990) (Eubacterium rectale)).